A 149-amino-acid chain; its full sequence is Large ribosomal subunit protein uL22c (149 aa).

It belongs to the universal ribosomal protein uL22 family. As to quaternary structure, part of the 50S ribosomal subunit.

It localises to the plastid. The protein resides in the chloroplast. In terms of biological role, this protein binds specifically to 23S rRNA. Functionally, the globular domain of the protein is located near the polypeptide exit tunnel on the outside of the subunit, while an extended beta-hairpin is found that lines the wall of the exit tunnel in the center of the 70S ribosome. The protein is Large ribosomal subunit protein uL22c (rpl22) of Hordeum vulgare (Barley).